Here is a 269-residue protein sequence, read N- to C-terminus: Putative pyridoxine kinase (269 aa).

Position 139 (Asn-139) interacts with ATP. Residue Glu-142 participates in Mg(2+) binding. ATP contacts are provided by residues Lys-176–Arg-180, Asp-189, Val-205, Gly-214, and Lys-239.

The protein belongs to the ThiD family.

It carries out the reaction pyridoxal + ATP = pyridoxal 5'-phosphate + ADP + H(+). In terms of biological role, phosphorylates B6 vitamers; functions in a salvage pathway. Uses pyridoxal, pyridoxine, and pyridoxamine as substrates. The polypeptide is Putative pyridoxine kinase (pdxK) (Treponema pallidum (strain Nichols)).